Reading from the N-terminus, the 104-residue chain is Nucleoid-associated protein Dtur_0258 (104 aa).

Positions 84-104 (EKSAEKMGSLTDGLPLPPGLF) are disordered.

The protein belongs to the YbaB/EbfC family. Homodimer.

The protein resides in the cytoplasm. It localises to the nucleoid. Its function is as follows. Binds to DNA and alters its conformation. May be involved in regulation of gene expression, nucleoid organization and DNA protection. This Dictyoglomus turgidum (strain DSM 6724 / Z-1310) protein is Nucleoid-associated protein Dtur_0258.